Reading from the N-terminus, the 199-residue chain is Crossover junction endodeoxyribonuclease RuvC (199 aa).

Residues Asp7, Glu68, and Asp141 contribute to the active site. Mg(2+)-binding residues include Asp7, Glu68, and Asp141.

This sequence belongs to the RuvC family. As to quaternary structure, homodimer which binds Holliday junction (HJ) DNA. The HJ becomes 2-fold symmetrical on binding to RuvC with unstacked arms; it has a different conformation from HJ DNA in complex with RuvA. In the full resolvosome a probable DNA-RuvA(4)-RuvB(12)-RuvC(2) complex forms which resolves the HJ. Mg(2+) is required as a cofactor.

Its subcellular location is the cytoplasm. The catalysed reaction is Endonucleolytic cleavage at a junction such as a reciprocal single-stranded crossover between two homologous DNA duplexes (Holliday junction).. The RuvA-RuvB-RuvC complex processes Holliday junction (HJ) DNA during genetic recombination and DNA repair. Endonuclease that resolves HJ intermediates. Cleaves cruciform DNA by making single-stranded nicks across the HJ at symmetrical positions within the homologous arms, yielding a 5'-phosphate and a 3'-hydroxyl group; requires a central core of homology in the junction. The consensus cleavage sequence is 5'-(A/T)TT(C/G)-3'. Cleavage occurs on the 3'-side of the TT dinucleotide at the point of strand exchange. HJ branch migration catalyzed by RuvA-RuvB allows RuvC to scan DNA until it finds its consensus sequence, where it cleaves and resolves the cruciform DNA. The chain is Crossover junction endodeoxyribonuclease RuvC from Saccharopolyspora erythraea (strain ATCC 11635 / DSM 40517 / JCM 4748 / NBRC 13426 / NCIMB 8594 / NRRL 2338).